The primary structure comprises 311 residues: Replicative helicase loader DnaI (311 aa).

The segment at 1–136 (MEPIGRSLQG…LGATFQQVDI (136 aa)) is N-terminal domain (Nd). C67, C70, H84, and C101 together coordinate Zn(2+). Residues 137-311 (SDPSRLAMFQ…RLDGENRRHP (175 aa)) form a C-terminal domain (Cd) region. Residue 168 to 175 (GKFGVGKT) coordinates ATP.

The protein belongs to the DnaI family. As to quaternary structure, the DNA replisome assembles sequentially on oriC in this order; DnaA, DnaD, DnaB, DnaI-DnaC helicase. Monomer with a very minor amount of dimer in solution. Interacts with replicative helicase (from G.stearothermophilus, called DnaB); this interaction is disrupted by DnaD. Interacts with replicative helicase DnaC, forms a DnaC(6):DnaI(6) complex. Interacts with the helicase as 3 dimers. A stable complex with DnaG primase, DnaI(6):helicase(6):DnaG(3) fragment can be isolated; DnaI and DnaG do not contact each other (helicase and DnaG in this complex are derived from G.stearothermophilus). It depends on Zn(2+) as a cofactor.

It localises to the cytoplasm. The catalysed reaction is ATP + H2O = ADP + phosphate + H(+). Helps load the DnaC replicative helicase onto single-stranded (ss)DNA and simulates the helicase activity; in the presence of DnaB more helicase activity is seen. Regulates DnaC helicase activity, at low concentrations stimulates the DNA helicase and ATPase activities of DnaC. Has no measurable ATPase activity after 1 hour incubation of 6 uM DnaI with or without DNA. Another group has found the protein has weak ATPase activity that is not stimulated by ssDNA. Whole protein binds forked DNA (but not ssDNA) weakly; ATP and ADPNP (probably 5'-adenylyl beta, gamma-imidodiphosphate) have no effect on DNA binding. DnaB, DnaD and DnaI may be required for a PriA-independent pathway of replication fork restart. The polypeptide is Replicative helicase loader DnaI (Bacillus subtilis (strain 168)).